The following is a 221-amino-acid chain: 3-phospho-D-glycerate guanylyltransferase (221 aa).

The protein belongs to the CofC family.

The catalysed reaction is (2R)-3-phosphoglycerate + GTP + H(+) = 3-[(R)-glyceryl]-diphospho-5'-guanosine + diphosphate. It catalyses the reaction (2S)-2-phospholactate + GTP + H(+) = (2S)-lactyl-2-diphospho-5'-guanosine + diphosphate. It participates in cofactor biosynthesis; coenzyme F420 biosynthesis. In terms of biological role, guanylyltransferase that catalyzes the activation of (2R)-3-phosphoglycerate (3PG) as 3-[(R)-glyceryl]-diphospho-5'-guanosine, via the condensation of 3PG with GTP. It is involved in the biosynthesis of a derivative of the hydride carrier cofactor coenzyme F420, 3PG-F420. Can also use (2S)-2-phospholactate (2-PL), with lower turnover, and has weak activity with phosphoenolpyruvate (PEP). The chain is 3-phospho-D-glycerate guanylyltransferase from Mycetohabitans rhizoxinica (strain DSM 19002 / CIP 109453 / HKI 454) (Paraburkholderia rhizoxinica).